Reading from the N-terminus, the 99-residue chain is Prostate and testis expressed protein 14 (99 aa).

Residues 1–21 (MGKNILLLLLGLSFVIGFLQA) form the signal peptide. The UPAR/Ly6 domain maps to 22–99 (LRCLECDMLN…CHDQSLCNEF (78 aa)). Cystine bridges form between Cys-24–Cys-51, Cys-27–Cys-36, Cys-43–Cys-69, Cys-73–Cys-89, and Cys-90–Cys-96. Asn-40 carries an N-linked (GlcNAc...) asparagine glycan. Residues Asn-75 and Asn-82 are each glycosylated (N-linked (GlcNAc...) asparagine).

Belongs to the PATE family. As to quaternary structure, monomer.

Its subcellular location is the secreted. The sequence is that of Prostate and testis expressed protein 14 from Rattus norvegicus (Rat).